A 362-amino-acid chain; its full sequence is MKESLRLRLDQMVDRYEEVTALLSDPSVISDNNKFRELSVEHSDLMDITTLWQNYVGAEKDQADAEAMLKEASDPDMKEMMQEEIDSARDTIVEMEEALNLMMLPKDPNDKVPAFLEIRAGTGGDEAAIFSGDLFRMYQKFAQNQGWTLEILSANEGEHGGYKEIITRVSGNSVYGRLKFESGVHRVQRVPDTESQGRVHTSACTVAVMPEVEIDDTVDLNPADIRFDTFRSSGAGGQHVNTTDSAVRLTHIPTGTVVECQQERSQHKNRAQAMKMLISKIQQVKVQAQVDAADTIRRDLVGSGDRSERIRTYNFPQGRMTDHRINLTLYKLDSIMEGDLDEILDALLREHQADLMASIGGA.

N5-methylglutamine is present on Gln-238.

Belongs to the prokaryotic/mitochondrial release factor family. In terms of processing, methylated by PrmC. Methylation increases the termination efficiency of RF1.

It localises to the cytoplasm. Peptide chain release factor 1 directs the termination of translation in response to the peptide chain termination codons UAG and UAA. This is Peptide chain release factor 1 from Psychrobacter cryohalolentis (strain ATCC BAA-1226 / DSM 17306 / VKM B-2378 / K5).